The sequence spans 400 residues: Canavanine gamma-lyase (400 aa).

The residue at position 213 (K213) is an N6-(pyridoxal phosphate)lysine.

This sequence belongs to the trans-sulfuration enzymes family. Pyridoxal 5'-phosphate serves as cofactor.

The enzyme catalyses L-canavanine + H2O = N-hydroxyguanidine + L-homoserine. In terms of biological role, lyase involved in the degradation of canavanine, the delta-oxa-analog of arginine, allowing growth on canavanine as sole nitrogen and carbon source. Catalyzes the elimination of hydroxyguanidine from canavanine with a subsequent water addition to yield homoserine. Is highly specific for canavanine and cannot use methionine, cystathionine or arginine. The chain is Canavanine gamma-lyase from Pseudomonas canavaninivorans.